Consider the following 80-residue polypeptide: DNA-directed RNA polymerase RPB10 homolog (80 aa).

Zn(2+)-binding residues include cysteine 7, cysteine 10, cysteine 65, and cysteine 66.

The protein belongs to the archaeal RpoN/eukaryotic RPB10 RNA polymerase subunit family. Part of the viral DNA-directed RNA polymerase that consists of 8 polII-like subunits (RPB1, RPB2, RPB3, RPB5, RPB6, RPB7, RPB9, RPB10), a capping enzyme and a termination factor.

It localises to the host cytoplasm. In terms of biological role, component of the DNA-directed RNA polymerase (RNAP) that catalyzes the transcription in the cytoplasm of viral DNA into RNA using the four ribonucleoside triphosphates as substrates. This African swine fever virus (strain Badajoz 1971 Vero-adapted) (Ba71V) protein is DNA-directed RNA polymerase RPB10 homolog.